The sequence spans 409 residues: Multifunctional CCA protein (409 aa).

Positions 8 and 11 each coordinate ATP. CTP contacts are provided by Gly-8 and Arg-11. Residues Asp-21 and Asp-23 each contribute to the Mg(2+) site. Residues Arg-91, Arg-137, and Arg-140 each contribute to the ATP site. 3 residues coordinate CTP: Arg-91, Arg-137, and Arg-140. Residues Thr-228 to Tyr-329 form the HD domain.

This sequence belongs to the tRNA nucleotidyltransferase/poly(A) polymerase family. Bacterial CCA-adding enzyme type 1 subfamily. In terms of assembly, monomer. Can also form homodimers and oligomers. Requires Mg(2+) as cofactor. Ni(2+) is required as a cofactor.

The enzyme catalyses a tRNA precursor + 2 CTP + ATP = a tRNA with a 3' CCA end + 3 diphosphate. It catalyses the reaction a tRNA with a 3' CCA end + 2 CTP + ATP = a tRNA with a 3' CCACCA end + 3 diphosphate. Its function is as follows. Catalyzes the addition and repair of the essential 3'-terminal CCA sequence in tRNAs without using a nucleic acid template. Adds these three nucleotides in the order of C, C, and A to the tRNA nucleotide-73, using CTP and ATP as substrates and producing inorganic pyrophosphate. tRNA 3'-terminal CCA addition is required both for tRNA processing and repair. Also involved in tRNA surveillance by mediating tandem CCA addition to generate a CCACCA at the 3' terminus of unstable tRNAs. While stable tRNAs receive only 3'-terminal CCA, unstable tRNAs are marked with CCACCA and rapidly degraded. The protein is Multifunctional CCA protein of Pseudomonas fluorescens (strain SBW25).